Here is a 95-residue protein sequence, read N- to C-terminus: Pyrimidine/purine nucleoside phosphorylase (95 aa).

The protein belongs to the nucleoside phosphorylase PpnP family.

It carries out the reaction a purine D-ribonucleoside + phosphate = a purine nucleobase + alpha-D-ribose 1-phosphate. The catalysed reaction is adenosine + phosphate = alpha-D-ribose 1-phosphate + adenine. It catalyses the reaction cytidine + phosphate = cytosine + alpha-D-ribose 1-phosphate. The enzyme catalyses guanosine + phosphate = alpha-D-ribose 1-phosphate + guanine. It carries out the reaction inosine + phosphate = alpha-D-ribose 1-phosphate + hypoxanthine. The catalysed reaction is thymidine + phosphate = 2-deoxy-alpha-D-ribose 1-phosphate + thymine. It catalyses the reaction uridine + phosphate = alpha-D-ribose 1-phosphate + uracil. The enzyme catalyses xanthosine + phosphate = alpha-D-ribose 1-phosphate + xanthine. Catalyzes the phosphorolysis of diverse nucleosides, yielding D-ribose 1-phosphate and the respective free bases. Can use uridine, adenosine, guanosine, cytidine, thymidine, inosine and xanthosine as substrates. Also catalyzes the reverse reactions. This Yersinia pestis bv. Antiqua (strain Antiqua) protein is Pyrimidine/purine nucleoside phosphorylase.